The primary structure comprises 746 residues: F-box only protein 30 (746 aa).

The TRAF-type zinc finger occupies 49-110 (EHRLLCPFER…SYSDRKSYES (62 aa)). Disordered regions lie at residues 222–241 (MDEE…DQDH) and 247–266 (IGAV…QAEQ). Basic and acidic residues predominate over residues 225–241 (ENNKESFQDKNLKDQDH). The span at 256-266 (SGTSQNAQAEQ) shows a compositional bias: polar residues. The residue at position 383 (Ser-383) is a Phosphoserine. One can recognise an F-box domain in the interval 611–659 (SDHLSSLPFEVLQHIAGFLDGFSLCQLACVSRLMRDVCGSLLQSRGMVI).

In terms of assembly, part of a SCF (SKP1-cullin-F-box) protein ligase complex. Interacts with SKP1, CUL1 and RBX1/ROC1. In terms of processing, auto-ubiquitinated. Post-translationally, may be neddylated. Neddylation may be required for E3 ligase activity, since it was observed only after purification with o-phenanthroline.

It functions in the pathway protein modification; protein ubiquitination. Substrate-recognition component of the SCF (SKP1-CUL1-F-box protein)-type E3 ubiquitin ligase complex. Required for muscle atrophy following denervation. In Mus musculus (Mouse), this protein is F-box only protein 30 (Fbxo30).